Here is a 212-residue protein sequence, read N- to C-terminus: Ribosomal RNA small subunit methyltransferase G (212 aa).

Residues Gly-80, Leu-85, 131 to 132, and Arg-146 contribute to the S-adenosyl-L-methionine site; that span reads AE.

It belongs to the methyltransferase superfamily. RNA methyltransferase RsmG family.

The protein resides in the cytoplasm. It catalyses the reaction guanosine(527) in 16S rRNA + S-adenosyl-L-methionine = N(7)-methylguanosine(527) in 16S rRNA + S-adenosyl-L-homocysteine. In terms of biological role, specifically methylates the N7 position of guanine in position 527 of 16S rRNA. The chain is Ribosomal RNA small subunit methyltransferase G from Xylella fastidiosa (strain M23).